The following is a 403-amino-acid chain: MSSYLFTSESVSEGHPDKIADQISDAVLDAILAQDKRARVACETMVKTGVAIVAGEVTTSAWIDLEALTRKVILDIGYNSSDVGFDGETCGVLNLIGKQSPDINQGVDRKNPEQQGAGDQGLMFGYATNETDSFMPAAIHLSHRLVEQQAKIRKKKNSALSWLRPDAKSQVTLRYEDGVATAIDAVVLSTQHDPGVKQKDLIEAVREEILKPVLPAKWLHKGTKFHINPTGKFVIGGPVGDCGLTGRKIIVDTYGGWARHGGGAFSGKDPSKVDRSAAYAARYVAKNVVAAGLADRCEVQVSYAIGVAEPTSISVTTFGTGKIADEQIEKLIRKHFDLRPFGIIQMLDLIHPMYQQTASYGHFGRKPKDFTYTDGTGAQHSATSFSWEKTDRADALRAAAKLK.

His-15 provides a ligand contact to ATP. Asp-17 serves as a coordination point for Mg(2+). Glu-43 lines the K(+) pocket. L-methionine contacts are provided by Glu-56 and Gln-99. The segment at 99-109 (QSPDINQGVDR) is flexible loop. ATP-binding positions include 166–168 (DAK), 232–233 (KF), Asp-241, 247–248 (RK), Ala-264, and Lys-268. An L-methionine-binding site is contributed by Asp-241. Lys-272 contributes to the L-methionine binding site.

It belongs to the AdoMet synthase family. In terms of assembly, homotetramer; dimer of dimers. Requires Mg(2+) as cofactor. The cofactor is K(+).

The protein localises to the cytoplasm. The catalysed reaction is L-methionine + ATP + H2O = S-adenosyl-L-methionine + phosphate + diphosphate. The protein operates within amino-acid biosynthesis; S-adenosyl-L-methionine biosynthesis; S-adenosyl-L-methionine from L-methionine: step 1/1. Functionally, catalyzes the formation of S-adenosylmethionine (AdoMet) from methionine and ATP. The overall synthetic reaction is composed of two sequential steps, AdoMet formation and the subsequent tripolyphosphate hydrolysis which occurs prior to release of AdoMet from the enzyme. This is S-adenosylmethionine synthase from Xanthomonas axonopodis pv. citri (strain 306).